A 307-amino-acid chain; its full sequence is Ribosomal protein L11 methyltransferase (307 aa).

S-adenosyl-L-methionine contacts are provided by Thr-162, Gly-183, Asp-205, and Asn-244.

This sequence belongs to the methyltransferase superfamily. PrmA family.

The protein localises to the cytoplasm. It catalyses the reaction L-lysyl-[protein] + 3 S-adenosyl-L-methionine = N(6),N(6),N(6)-trimethyl-L-lysyl-[protein] + 3 S-adenosyl-L-homocysteine + 3 H(+). In terms of biological role, methylates ribosomal protein L11. This Bordetella parapertussis (strain 12822 / ATCC BAA-587 / NCTC 13253) protein is Ribosomal protein L11 methyltransferase.